The following is a 138-amino-acid chain: uncharacterized protein (138 aa).

The next 3 membrane-spanning stretches (helical) occupy residues 12-32, 62-82, and 111-131; these read LHFLGFIGGIFAILGVIVLPI, LIAVPLFVLGYFISTIDFSVL, and FHWVASLPAWFITTVCALICS.

The protein localises to the cell membrane. This is an uncharacterized protein from Haemophilus influenzae (strain ATCC 51907 / DSM 11121 / KW20 / Rd).